Reading from the N-terminus, the 452-residue chain is Na(+)/H(+) antiporter NhaA (452 aa).

11 helical membrane passes run 23-43 (MMLF…LSTI), 71-91 (LLQF…GLEI), 108-128 (LPIV…LLVV), 136-156 (GAAI…AVLG), 165-185 (VFLT…IALF), 189-209 (HINI…YLMG), 216-236 (LGLY…SGIH), 316-336 (IVGY…TLGG), 349-369 (VFLG…YGFV), 385-405 (LMAV…IATL), and 418-438 (EAKL…IVTL).

This sequence belongs to the NhaA Na(+)/H(+) (TC 2.A.33) antiporter family.

The protein localises to the cell inner membrane. It catalyses the reaction Na(+)(in) + 2 H(+)(out) = Na(+)(out) + 2 H(+)(in). In terms of biological role, na(+)/H(+) antiporter that extrudes sodium in exchange for external protons. The polypeptide is Na(+)/H(+) antiporter NhaA (Porphyromonas gingivalis (strain ATCC BAA-308 / W83)).